Consider the following 274-residue polypeptide: 2,3,4,5-tetrahydropyridine-2,6-dicarboxylate N-succinyltransferase (274 aa).

The substrate site is built by Arg-106 and Asp-143.

It belongs to the transferase hexapeptide repeat family. Homotrimer.

The protein localises to the cytoplasm. The enzyme catalyses (S)-2,3,4,5-tetrahydrodipicolinate + succinyl-CoA + H2O = (S)-2-succinylamino-6-oxoheptanedioate + CoA. Its pathway is amino-acid biosynthesis; L-lysine biosynthesis via DAP pathway; LL-2,6-diaminopimelate from (S)-tetrahydrodipicolinate (succinylase route): step 1/3. This chain is 2,3,4,5-tetrahydropyridine-2,6-dicarboxylate N-succinyltransferase, found in Acidovorax sp. (strain JS42).